We begin with the raw amino-acid sequence, 326 residues long: MSNGYEDHMDDVCRDDIGRTNLIVNYLPQNMTQDELRSLFSSIGEVESAKLIRDKVAGHSLGYGFVNYLNAKDAERAINTLNGLRLQSKTIKVSFARPSSETIKDANLYISGLPRTMTQKDVEDMFLPFGHIINSRVLVDQATGLSRGVAFIRFDKRSEAEEAIASFNGHKPPGSSEPITVKFAANPNQSKNMALLSQICHSPARRFGGPVHHQAQRFRFSPMGVDHMSSISSVNVASSASSGWCIFIYNLGQDADEGILWQMFGPFGAVTNVKVIRDFNTNKCKGFGFVTMTNYEEAAMAIASLNGYRLGDKTLQVSFKTSKSHK.

3 consecutive RRM domains span residues 20 to 98 (TNLI…FARP), 106 to 186 (ANLY…FAAN), and 244 to 322 (WCIF…FKTS).

This sequence belongs to the RRM elav family. In terms of assembly, interacts (via RRM3) with cirbp. Unable to form oligomers. Part of a ribonucleoprotein (RNP) complex, at least composed of elavl1/elrA and/or elavl2/elrB, igf2bp3/vg1RBP, ddx6/Xp54, ybx2/frgy2, lsm14b/rap55b and, in a subset of RNP complexes, stau1/staufen.

The protein resides in the cytoplasm. Its subcellular location is the cell cortex. Its function is as follows. RNA-binding protein that binds to the 3'-UTR region of mRNAs and increases their stability. Involved in embryonic stem cells (ESCs) differentiation: preferentially binds mRNAs that are not methylated by N6-methyladenosine (m6A), stabilizing them, promoting ESCs differentiation. Binds to poly-U elements and AU-rich elements (AREs) in the 3'-UTR of target mRNAs. Acts cooperatively with cribp to stabilize AU-rich sequence (ARE)-containing mRNAs. May play a role during gastrulation. Required for the vegetal localization of vg1 mRNA. The polypeptide is ELAV-like protein 1-B (elavl1-b) (Xenopus laevis (African clawed frog)).